The following is a 548-amino-acid chain: Organic cation transporter protein (548 aa).

Residues methionine 1–tyrosine 22 lie on the Cytoplasmic side of the membrane. A helical transmembrane segment spans residues leucine 23–alanine 43. Residues lysine 44–serine 127 lie on the Extracellular side of the membrane. Asparagine 55, asparagine 67, asparagine 89, and asparagine 97 each carry an N-linked (GlcNAc...) asparagine glycan. A helical membrane pass occupies residues leucine 128 to phenylalanine 148. The Cytoplasmic portion of the chain corresponds to glycine 149–lysine 158. Residues proline 159 to proline 179 form a helical membrane-spanning segment. Topologically, residues glutamate 180–methionine 189 are extracellular. The chain crosses the membrane as a helical span at residues isoleucine 190 to valine 210. The Cytoplasmic portion of the chain corresponds to glycine 211–glycine 219. Residues valine 220–isoleucine 240 traverse the membrane as a helical segment. Topologically, residues histidine 241–arginine 244 are extracellular. A helical membrane pass occupies residues tryptophan 245 to proline 265. The Cytoplasmic segment spans residues glutamate 266 to lysine 337. Residues threonine 338 to asparagine 358 traverse the membrane as a helical segment. Residues threonine 359 to glutamine 366 lie on the Extracellular side of the membrane. A helical membrane pass occupies residues leucine 367–threonine 387. The Cytoplasmic segment spans residues leucine 388 to serine 395. Residues isoleucine 396–serine 416 traverse the membrane as a helical segment. At aspartate 417 to asparagine 419 the chain is on the extracellular side. A helical transmembrane segment spans residues tryptophan 420 to isoleucine 440. Topologically, residues tyrosine 441–arginine 453 are cytoplasmic. A helical membrane pass occupies residues asparagine 454–leucine 474. Residues lysine 475–arginine 482 lie on the Extracellular side of the membrane. A helical transmembrane segment spans residues proline 483–leucine 503. At proline 504–glycine 548 the chain is on the cytoplasmic side. Residues proline 512–glycine 548 are disordered.

The protein belongs to the major facilitator (TC 2.A.1) superfamily. Organic cation transporter (TC 2.A.1.19) family. Expressed in embryos and adults at low level. Expressed at higher level in third instar larvae.

It localises to the membrane. Its function is as follows. Probably transports organic cations. The sequence is that of Organic cation transporter protein (Orct) from Drosophila melanogaster (Fruit fly).